Here is a 384-residue protein sequence, read N- to C-terminus: Dual-specificity RNA methyltransferase RlmN (384 aa).

Catalysis depends on Glu-105, which acts as the Proton acceptor. A Radical SAM core domain is found at 111 to 350 (EDDRATLCVS…TIVRKTRGDD (240 aa)). A disulfide bridge connects residues Cys-118 and Cys-355. The [4Fe-4S] cluster site is built by Cys-125, Cys-129, and Cys-132. Residues 179–180 (GE), Ser-211, 233–235 (SLH), and Asn-312 contribute to the S-adenosyl-L-methionine site. Cys-355 functions as the S-methylcysteine intermediate in the catalytic mechanism.

It belongs to the radical SAM superfamily. RlmN family. [4Fe-4S] cluster is required as a cofactor.

It is found in the cytoplasm. It carries out the reaction adenosine(2503) in 23S rRNA + 2 reduced [2Fe-2S]-[ferredoxin] + 2 S-adenosyl-L-methionine = 2-methyladenosine(2503) in 23S rRNA + 5'-deoxyadenosine + L-methionine + 2 oxidized [2Fe-2S]-[ferredoxin] + S-adenosyl-L-homocysteine. The catalysed reaction is adenosine(37) in tRNA + 2 reduced [2Fe-2S]-[ferredoxin] + 2 S-adenosyl-L-methionine = 2-methyladenosine(37) in tRNA + 5'-deoxyadenosine + L-methionine + 2 oxidized [2Fe-2S]-[ferredoxin] + S-adenosyl-L-homocysteine. Functionally, specifically methylates position 2 of adenine 2503 in 23S rRNA and position 2 of adenine 37 in tRNAs. m2A2503 modification seems to play a crucial role in the proofreading step occurring at the peptidyl transferase center and thus would serve to optimize ribosomal fidelity. This Escherichia fergusonii (strain ATCC 35469 / DSM 13698 / CCUG 18766 / IAM 14443 / JCM 21226 / LMG 7866 / NBRC 102419 / NCTC 12128 / CDC 0568-73) protein is Dual-specificity RNA methyltransferase RlmN.